Reading from the N-terminus, the 287-residue chain is 4-hydroxybenzoate octaprenyltransferase (287 aa).

The next 6 helical transmembrane spans lie at tryptophan 41–methionine 61, tryptophan 89–leucine 109, phenylalanine 133–phenylalanine 153, asparagine 158–tyrosine 178, leucine 218–tryptophan 238, and asparagine 267–serine 287.

This sequence belongs to the UbiA prenyltransferase family. Mg(2+) serves as cofactor.

The protein resides in the cell inner membrane. It catalyses the reaction all-trans-octaprenyl diphosphate + 4-hydroxybenzoate = 4-hydroxy-3-(all-trans-octaprenyl)benzoate + diphosphate. It functions in the pathway cofactor biosynthesis; ubiquinone biosynthesis. Catalyzes the prenylation of para-hydroxybenzoate (PHB) with an all-trans polyprenyl group. Mediates the second step in the final reaction sequence of ubiquinone-8 (UQ-8) biosynthesis, which is the condensation of the polyisoprenoid side chain with PHB, generating the first membrane-bound Q intermediate 3-octaprenyl-4-hydroxybenzoate. The protein is 4-hydroxybenzoate octaprenyltransferase of Burkholderia multivorans (strain ATCC 17616 / 249).